The primary structure comprises 249 residues: Small ribosomal subunit protein uS3 (249 aa).

Residues 39-107 form the KH type-2 domain; sequence VRAMLKKRLY…EVHLNIVEIR (69 aa). Positions 215–249 are disordered; sequence LDKRLATESGPAGEGGGRERGDRPDRGDRGRRDRG. Residues 230 to 249 show a composition bias toward basic and acidic residues; it reads GGRERGDRPDRGDRGRRDRG.

The protein belongs to the universal ribosomal protein uS3 family. Part of the 30S ribosomal subunit. Forms a tight complex with proteins S10 and S14.

In terms of biological role, binds the lower part of the 30S subunit head. Binds mRNA in the 70S ribosome, positioning it for translation. The sequence is that of Small ribosomal subunit protein uS3 from Caulobacter sp. (strain K31).